The sequence spans 357 residues: UDP-N-acetylglucosamine--N-acetylmuramyl-(pentapeptide) pyrophosphoryl-undecaprenol N-acetylglucosamine transferase (357 aa).

UDP-N-acetyl-alpha-D-glucosamine is bound by residues 13-15 (TGG), Asn125, Arg161, Ser189, Ile243, and Gln288.

This sequence belongs to the glycosyltransferase 28 family. MurG subfamily.

The protein resides in the cell inner membrane. The enzyme catalyses di-trans,octa-cis-undecaprenyl diphospho-N-acetyl-alpha-D-muramoyl-L-alanyl-D-glutamyl-meso-2,6-diaminopimeloyl-D-alanyl-D-alanine + UDP-N-acetyl-alpha-D-glucosamine = di-trans,octa-cis-undecaprenyl diphospho-[N-acetyl-alpha-D-glucosaminyl-(1-&gt;4)]-N-acetyl-alpha-D-muramoyl-L-alanyl-D-glutamyl-meso-2,6-diaminopimeloyl-D-alanyl-D-alanine + UDP + H(+). It functions in the pathway cell wall biogenesis; peptidoglycan biosynthesis. Its function is as follows. Cell wall formation. Catalyzes the transfer of a GlcNAc subunit on undecaprenyl-pyrophosphoryl-MurNAc-pentapeptide (lipid intermediate I) to form undecaprenyl-pyrophosphoryl-MurNAc-(pentapeptide)GlcNAc (lipid intermediate II). This is UDP-N-acetylglucosamine--N-acetylmuramyl-(pentapeptide) pyrophosphoryl-undecaprenol N-acetylglucosamine transferase from Bordetella petrii (strain ATCC BAA-461 / DSM 12804 / CCUG 43448).